The chain runs to 112 residues: Divalent-cation tolerance protein CutA (112 aa).

3 residues coordinate Cu cation: Cys-16, His-83, and His-84.

It belongs to the CutA family. In terms of assembly, homotrimer. It depends on Cu cation as a cofactor.

It is found in the cytoplasm. Involved in resistance toward heavy metals. The protein is Divalent-cation tolerance protein CutA of Escherichia coli O81 (strain ED1a).